The following is a 214-amino-acid chain: 3-isopropylmalate dehydratase small subunit (214 aa).

It belongs to the LeuD family. LeuD type 1 subfamily. As to quaternary structure, heterodimer of LeuC and LeuD.

The catalysed reaction is (2R,3S)-3-isopropylmalate = (2S)-2-isopropylmalate. Its pathway is amino-acid biosynthesis; L-leucine biosynthesis; L-leucine from 3-methyl-2-oxobutanoate: step 2/4. Its function is as follows. Catalyzes the isomerization between 2-isopropylmalate and 3-isopropylmalate, via the formation of 2-isopropylmaleate. This Pseudomonas fluorescens (strain ATCC BAA-477 / NRRL B-23932 / Pf-5) protein is 3-isopropylmalate dehydratase small subunit.